The following is a 341-amino-acid chain: Uroporphyrinogen decarboxylase (341 aa).

Residues Arg-26–Arg-30, Asp-75, Tyr-150, Ser-205, and His-318 contribute to the substrate site.

It belongs to the uroporphyrinogen decarboxylase family. In terms of assembly, homodimer.

Its subcellular location is the cytoplasm. It catalyses the reaction uroporphyrinogen III + 4 H(+) = coproporphyrinogen III + 4 CO2. It functions in the pathway porphyrin-containing compound metabolism; protoporphyrin-IX biosynthesis; coproporphyrinogen-III from 5-aminolevulinate: step 4/4. Catalyzes the decarboxylation of four acetate groups of uroporphyrinogen-III to yield coproporphyrinogen-III. In Thermus thermophilus (strain ATCC BAA-163 / DSM 7039 / HB27), this protein is Uroporphyrinogen decarboxylase.